The following is a 123-amino-acid chain: Large ribosomal subunit protein bL12 (123 aa).

The protein belongs to the bacterial ribosomal protein bL12 family. In terms of assembly, homodimer. Part of the ribosomal stalk of the 50S ribosomal subunit. Forms a multimeric L10(L12)X complex, where L10 forms an elongated spine to which 2 to 4 L12 dimers bind in a sequential fashion. Binds GTP-bound translation factors.

Forms part of the ribosomal stalk which helps the ribosome interact with GTP-bound translation factors. Is thus essential for accurate translation. The polypeptide is Large ribosomal subunit protein bL12 (Bacillus licheniformis (strain ATCC 14580 / DSM 13 / JCM 2505 / CCUG 7422 / NBRC 12200 / NCIMB 9375 / NCTC 10341 / NRRL NRS-1264 / Gibson 46)).